The sequence spans 204 residues: N-(5'-phosphoribosyl)anthranilate isomerase (204 aa).

Belongs to the TrpF family.

It carries out the reaction N-(5-phospho-beta-D-ribosyl)anthranilate = 1-(2-carboxyphenylamino)-1-deoxy-D-ribulose 5-phosphate. It functions in the pathway amino-acid biosynthesis; L-tryptophan biosynthesis; L-tryptophan from chorismate: step 3/5. This is N-(5'-phosphoribosyl)anthranilate isomerase from Bacillus cereus (strain Q1).